Consider the following 360-residue polypeptide: UDP-N-acetylglucosamine--N-acetylmuramyl-(pentapeptide) pyrophosphoryl-undecaprenol N-acetylglucosamine transferase (360 aa).

Residues 15-17, N128, R164, S192, I247, and Q292 each bind UDP-N-acetyl-alpha-D-glucosamine; that span reads TGG.

It belongs to the glycosyltransferase 28 family. MurG subfamily.

The protein localises to the cell inner membrane. It catalyses the reaction di-trans,octa-cis-undecaprenyl diphospho-N-acetyl-alpha-D-muramoyl-L-alanyl-D-glutamyl-meso-2,6-diaminopimeloyl-D-alanyl-D-alanine + UDP-N-acetyl-alpha-D-glucosamine = di-trans,octa-cis-undecaprenyl diphospho-[N-acetyl-alpha-D-glucosaminyl-(1-&gt;4)]-N-acetyl-alpha-D-muramoyl-L-alanyl-D-glutamyl-meso-2,6-diaminopimeloyl-D-alanyl-D-alanine + UDP + H(+). Its pathway is cell wall biogenesis; peptidoglycan biosynthesis. Its function is as follows. Cell wall formation. Catalyzes the transfer of a GlcNAc subunit on undecaprenyl-pyrophosphoryl-MurNAc-pentapeptide (lipid intermediate I) to form undecaprenyl-pyrophosphoryl-MurNAc-(pentapeptide)GlcNAc (lipid intermediate II). The polypeptide is UDP-N-acetylglucosamine--N-acetylmuramyl-(pentapeptide) pyrophosphoryl-undecaprenol N-acetylglucosamine transferase (Blochmanniella floridana).